The primary structure comprises 315 residues: Ribonuclease HII (315 aa).

The 190-residue stretch at 78–267 (TLVAGVDEAG…VREALGLAPL (190 aa)) folds into the RNase H type-2 domain. A divalent metal cation contacts are provided by Asp84, Glu85, and Asp176. The tract at residues 273-292 (APPPESAAEPGGEGAIAGIA) is disordered. The span at 278–292 (SAAEPGGEGAIAGIA) shows a compositional bias: low complexity.

The protein belongs to the RNase HII family. Mn(2+) serves as cofactor. Requires Mg(2+) as cofactor.

The protein localises to the cytoplasm. The enzyme catalyses Endonucleolytic cleavage to 5'-phosphomonoester.. Functionally, endonuclease that specifically degrades the RNA of RNA-DNA hybrids. This is Ribonuclease HII from Anaeromyxobacter sp. (strain Fw109-5).